The following is a 148-amino-acid chain: Augurin (148 aa).

A signal peptide spans 1–31 (MGTSSARPAVLALAGLALLLLLCLGPGDVSG). 2 propeptides span residues 32-68 (NKLKKMLQKREGPVPSKTNVAVSEHTAKEFLGGLKRA) and 133-148 (SREGFRHGASVNYDDY).

The protein belongs to the augurin family. As to expression, expressed in the brain, with expression in the choroid plexus and the ventricular ependymal cells (at protein level).

Its subcellular location is the secreted. It localises to the cytoplasm. It is found in the apical cell membrane. Functionally, probable hormone that may attenuate cell proliferation and induce senescence of oligodendrocyte and neural precursor cells in the central nervous system. ECRG4-induced senescence is characterized by G1 arrest, RB1 dephosphorylation and accelerated CCND1 and CCND3 proteasomal degradation. The polypeptide is Augurin (Rattus norvegicus (Rat)).